A 102-amino-acid polypeptide reads, in one-letter code: Small ribosomal subunit protein uS10 (102 aa).

The protein belongs to the universal ribosomal protein uS10 family. Part of the 30S ribosomal subunit.

In terms of biological role, involved in the binding of tRNA to the ribosomes. The chain is Small ribosomal subunit protein uS10 from Leuconostoc citreum (strain KM20).